A 248-amino-acid polypeptide reads, in one-letter code: UDP-2,3-diacylglucosamine hydrolase (248 aa).

Mn(2+)-binding residues include aspartate 7, histidine 9, aspartate 40, asparagine 78, and histidine 113. Asparagine 78–arginine 79 provides a ligand contact to substrate. Positions 121, 159, 163, 166, and 194 each coordinate substrate. Mn(2+) contacts are provided by histidine 194 and histidine 196.

The protein belongs to the LpxH family. Mn(2+) is required as a cofactor.

The protein localises to the cell inner membrane. The enzyme catalyses UDP-2-N,3-O-bis[(3R)-3-hydroxytetradecanoyl]-alpha-D-glucosamine + H2O = 2-N,3-O-bis[(3R)-3-hydroxytetradecanoyl]-alpha-D-glucosaminyl 1-phosphate + UMP + 2 H(+). The protein operates within glycolipid biosynthesis; lipid IV(A) biosynthesis; lipid IV(A) from (3R)-3-hydroxytetradecanoyl-[acyl-carrier-protein] and UDP-N-acetyl-alpha-D-glucosamine: step 4/6. In terms of biological role, hydrolyzes the pyrophosphate bond of UDP-2,3-diacylglucosamine to yield 2,3-diacylglucosamine 1-phosphate (lipid X) and UMP by catalyzing the attack of water at the alpha-P atom. Involved in the biosynthesis of lipid A, a phosphorylated glycolipid that anchors the lipopolysaccharide to the outer membrane of the cell. In Pseudomonas syringae pv. syringae (strain B728a), this protein is UDP-2,3-diacylglucosamine hydrolase.